The following is a 63-amino-acid chain: Large ribosomal subunit protein uL29 (63 aa).

It belongs to the universal ribosomal protein uL29 family.

The sequence is that of Large ribosomal subunit protein uL29 from Aeromonas salmonicida (strain A449).